Here is a 117-residue protein sequence, read N- to C-terminus: Immunoglobulin kappa variable 1-39 (117 aa).

Residues 1–22 form the signal peptide; that stretch reads MDMRVPAQLLGLLLLWLRGARC. The framework-1 stretch occupies residues 23–45; the sequence is DIQMTQSPSSLSASVGDRVTITC. Residues 24-117 enclose the Ig-like domain; sequence IQMTQSPSSL…YYCQQSYSTP (94 aa). The cysteines at positions 45 and 110 are disulfide-linked. A complementarity-determining-1 region spans residues 46 to 56; the sequence is RASQSISSYLN. The framework-2 stretch occupies residues 57–71; it reads WYQQKPGKAPKLLIY. The interval 72–78 is complementarity-determining-2; sequence AASSLQS. Residues 79–110 form a framework-3 region; sequence GVPSRFSGSGSGTDFTLTISSLQPEDFATYYC. The segment at 111–117 is complementarity-determining-3; it reads QQSYSTP.

Immunoglobulins are composed of two identical heavy chains and two identical light chains; disulfide-linked.

It is found in the secreted. The protein localises to the cell membrane. Functionally, v region of the variable domain of immunoglobulin light chains that participates in the antigen recognition. Immunoglobulins, also known as antibodies, are membrane-bound or secreted glycoproteins produced by B lymphocytes. In the recognition phase of humoral immunity, the membrane-bound immunoglobulins serve as receptors which, upon binding of a specific antigen, trigger the clonal expansion and differentiation of B lymphocytes into immunoglobulins-secreting plasma cells. Secreted immunoglobulins mediate the effector phase of humoral immunity, which results in the elimination of bound antigens. The antigen binding site is formed by the variable domain of one heavy chain, together with that of its associated light chain. Thus, each immunoglobulin has two antigen binding sites with remarkable affinity for a particular antigen. The variable domains are assembled by a process called V-(D)-J rearrangement and can then be subjected to somatic hypermutations which, after exposure to antigen and selection, allow affinity maturation for a particular antigen. This is Immunoglobulin kappa variable 1-39 from Homo sapiens (Human).